The primary structure comprises 405 residues: Secreted aspartic protease FUS4 (405 aa).

The N-terminal stretch at 1–24 (MLAIATLHVALQVFGAFSLSHAAA) is a signal peptide. One can recognise a Peptidase A1 domain in the interval 49–400 (YLFNVTVGSP…NFEERSFGLA (352 aa)). Residues Asn52, Asn61, Asn107, and Asn123 are each glycosylated (N-linked (GlcNAc...) asparagine). A disulfide bridge links Cys318 with Cys356.

Belongs to the peptidase A1 family.

It localises to the secreted. Its function is as follows. Secreted aspartic protease; part of the gene cluster that mediates the biosynthesis of the mycotoxin fusarin C. Within the cluster, FUS1, FUS2, FUS8 and FUS9 are sufficient for fusarin production. The other FUS cluster members are not essential for fusarin C biosynthesis. This Gibberella fujikuroi (strain CBS 195.34 / IMI 58289 / NRRL A-6831) (Bakanae and foot rot disease fungus) protein is Secreted aspartic protease FUS4.